Consider the following 195-residue polypeptide: Obelin (195 aa).

The propeptide occupies Met1–Ala6. EF-hand domains are found at residues Arg17–Ala52, Lys53–Phe88, Leu110–Ser145, and Pro146–Thr181. The Ca(2+) site is built by Asp30, Asn32, Asn34, Lys36, and Glu41. Residues Asp123, Asp125, Ser127, Thr129, Glu134, Asp159, Asp161, Ser163, Asp165, and Glu170 each contribute to the Ca(2+) site.

This sequence belongs to the aequorin family.

Ca(2+)-dependent bioluminescence photoprotein. Displays an emission peak at 470 nm (blue light). Trace amounts of calcium ion trigger the intramolecular oxidation of the chromophore, coelenterazine into coelenteramide and CO(2) with the concomitant emission of light. In Obelia longissima (Black sea hydrozoan), this protein is Obelin.